Consider the following 526-residue polypeptide: Butyrophilin subfamily 1 member A1 (526 aa).

The signal sequence occupies residues 1–26; sequence MAVFPSSGLPRCLLTLILLQLPKLDS. 2 consecutive Ig-like V-type domains span residues 27–138 and 148–234; these read APFD…ALVH and PHIS…VEIS. The Extracellular segment spans residues 27 to 242; the sequence is APFDVIGPPE…ISIPASSLPR (216 aa). Disulfide bonds link Cys50–Cys124 and Cys164–Cys218. Asn55 and Asn215 each carry an N-linked (GlcNAc...) asparagine glycan. A helical transmembrane segment spans residues 243–269; sequence LTPWIVAVAVILMVLGLLTIGSIFFTW. The Cytoplasmic portion of the chain corresponds to 270–526; that stretch reads RLYNERPRER…IPTQPSQGAP (257 aa). The B30.2/SPRY domain occupies 285–479; it reads SKERLLEELK…LTICPIADGP (195 aa). A disordered region spans residues 495-526; sequence IPLSPMGEDSAPRDADTLHSKLIPTQPSQGAP. Residues 504–513 are compositionally biased toward basic and acidic residues; that stretch reads SAPRDADTLH. Residues 517–526 are compositionally biased toward polar residues; that stretch reads IPTQPSQGAP.

This sequence belongs to the immunoglobulin superfamily. BTN/MOG family. Seems to associate with xanthine dehydrogenase/oxidase. In terms of processing, N-glycosylated.

The protein localises to the membrane. Its subcellular location is the secreted. Its function is as follows. May function in the secretion of milk-fat droplets. May act as a specific membrane-associated receptor for the association of cytoplasmic droplets with the apical plasma membrane. Inhibits the proliferation of CD4 and CD8 T-cells activated by anti-CD3 antibodies, T-cell metabolism and IL2 and IFNG secretion. This chain is Butyrophilin subfamily 1 member A1 (BTN1A1), found in Homo sapiens (Human).